The sequence spans 513 residues: Protein disulfide-isomerase (513 aa).

The N-terminal stretch at 1–23 is a signal peptide; sequence MAIRSKAWISLLLALAVALSARA. Residues 24–145 enclose the Thioredoxin 1 domain; sequence EEEPAAAAEG…IVDYLKKQVG (122 aa). Active-site nucleophile residues include C63 and C66. A disulfide bridge links C63 with C66. N-linked (GlcNAc...) asparagine glycosylation occurs at N279. The region spanning 366–485 is the Thioredoxin 2 domain; sequence FRNSEPIPEV…IVDFIKKSKE (120 aa). Residues C408 and C411 each act as nucleophile in the active site. C408 and C411 are disulfide-bonded. A disordered region spans residues 485 to 513; that stretch reads ETAAPHHHHHPGATGIREGSRAEPVKDEL. Positions 502-513 are enriched in basic and acidic residues; sequence EGSRAEPVKDEL. The Prevents secretion from ER signature appears at 510–513; it reads KDEL.

This sequence belongs to the protein disulfide isomerase family.

It is found in the endoplasmic reticulum lumen. It catalyses the reaction Catalyzes the rearrangement of -S-S- bonds in proteins.. Participates in the folding of proteins containing disulfide bonds, may be involved in glycosylation, prolyl hydroxylation and triglyceride transfer. The polypeptide is Protein disulfide-isomerase (PDI) (Zea mays (Maize)).